Reading from the N-terminus, the 466-residue chain is Integrin-linked protein kinase homolog pat-4 (466 aa).

3 ANK repeats span residues 50 to 79, 83 to 112, and 116 to 145; these read HAFS…RVNS, GDDT…DVNA, and HGMT…AVNV. Residues 210–465 enclose the Protein kinase domain; sequence LNLITKIAES…QIIPILERMI (256 aa).

It belongs to the protein kinase superfamily. TKL Ser/Thr protein kinase family. As to quaternary structure, interacts (via protein kinase domain) with unc-112 (via N-terminus). Interacts (via ANK repeats) with unc-97 (via first LIM domain). Interacts (via protein kinase domain) with pat-6 (via C-terminus CH domain). May form a complex with unc-112, unc-97 and pat-6. Does not interact with integrin pat-3. Component of an integrin containing attachment complex, composed of at least pat-2, pat-3, pat-4, pat-6, unc-52, unc-97 and unc-112. Expressed in body wall muscle.

Its subcellular location is the cytoplasm. It is found in the myofibril. The protein resides in the sarcomere. The protein localises to the m line. It localises to the basal cell membrane. Functionally, probable pseudokinase that acts as an adapter protein. Component of an integrin containing attachment complex, which is required for muscle development and maintenance. Involved in the assembly of dense bodies and M lines during body wall muscle development by recruiting several of their components including integrin pat-3, cpna-1, unc-89 and unc-112 to integrin-mediated attachment sites. Plays a role in distal tip cell (DTC) migration and in oocyte development probably by regulating the actin cytoskeleton. During the formation of neuromuscular junctions at the larval stage, negatively regulates membrane protrusion from body wall muscles. May be involved in thermotolerance and lifespan. The polypeptide is Integrin-linked protein kinase homolog pat-4 (Caenorhabditis elegans).